A 321-amino-acid polypeptide reads, in one-letter code: Peroxidase 42 (321 aa).

An N-terminal signal peptide occupies residues M1–A29. Q30 carries the pyrrolidone carboxylic acid modification. Cystine bridges form between C40-C118, C73-C78, C124-C315, and C202-C227. The active-site Proton acceptor is the H71. Residues D72, I75, G77, D79, and S81 each contribute to the Ca(2+) site. 2 N-linked (GlcNAc...) asparagine glycosylation sites follow: N85 and N96. Residue P165 participates in substrate binding. H195 is a heme b binding site. A Ca(2+)-binding site is contributed by T196. N-linked (GlcNAc...) asparagine glycosylation is present at N211. Ca(2+)-binding residues include D239, T242, and G247. N-linked (GlcNAc...) asparagine glycosylation occurs at N270.

It belongs to the peroxidase family. Classical plant (class III) peroxidase subfamily. The cofactor is heme b. Ca(2+) serves as cofactor.

The protein localises to the secreted. It catalyses the reaction 2 a phenolic donor + H2O2 = 2 a phenolic radical donor + 2 H2O. Removal of H(2)O(2), oxidation of toxic reductants, biosynthesis and degradation of lignin, suberization, auxin catabolism, response to environmental stresses such as wounding, pathogen attack and oxidative stress. These functions might be dependent on each isozyme/isoform in each plant tissue. This is Peroxidase 42 (PER42) from Zea mays (Maize).